Reading from the N-terminus, the 317-residue chain is Type II restriction enzyme NaeI (317 aa).

In terms of assembly, homodimer.

It carries out the reaction Endonucleolytic cleavage of DNA to give specific double-stranded fragments with terminal 5'-phosphates.. In terms of biological role, an E and P subtype restriction enzyme that recognizes the double-stranded unmethylated sequence 5'-GCCGGC-3' and cleaves after C-3. The chain is Type II restriction enzyme NaeI from Lentzea aerocolonigenes (Lechevalieria aerocolonigenes).